Reading from the N-terminus, the 428-residue chain is Serine--tRNA ligase (428 aa).

Residue 235–237 coordinates L-serine; that stretch reads TAE. 266–268 is an ATP binding site; the sequence is RSE. Glu289 contributes to the L-serine binding site. Residue 353 to 356 participates in ATP binding; it reads EISS. L-serine is bound at residue Ser389.

This sequence belongs to the class-II aminoacyl-tRNA synthetase family. Type-1 seryl-tRNA synthetase subfamily. Homodimer. The tRNA molecule binds across the dimer.

The protein resides in the cytoplasm. It carries out the reaction tRNA(Ser) + L-serine + ATP = L-seryl-tRNA(Ser) + AMP + diphosphate + H(+). The enzyme catalyses tRNA(Sec) + L-serine + ATP = L-seryl-tRNA(Sec) + AMP + diphosphate + H(+). Its pathway is aminoacyl-tRNA biosynthesis; selenocysteinyl-tRNA(Sec) biosynthesis; L-seryl-tRNA(Sec) from L-serine and tRNA(Sec): step 1/1. In terms of biological role, catalyzes the attachment of serine to tRNA(Ser). Is also able to aminoacylate tRNA(Sec) with serine, to form the misacylated tRNA L-seryl-tRNA(Sec), which will be further converted into selenocysteinyl-tRNA(Sec). The polypeptide is Serine--tRNA ligase (Shewanella baltica (strain OS155 / ATCC BAA-1091)).